A 313-amino-acid chain; its full sequence is N-acetyl-gamma-glutamyl-phosphate reductase (313 aa).

The active site involves C117.

The protein belongs to the NAGSA dehydrogenase family. Type 2 subfamily.

The protein localises to the cytoplasm. The enzyme catalyses N-acetyl-L-glutamate 5-semialdehyde + phosphate + NADP(+) = N-acetyl-L-glutamyl 5-phosphate + NADPH + H(+). It participates in amino-acid biosynthesis; L-arginine biosynthesis; N(2)-acetyl-L-ornithine from L-glutamate: step 3/4. Catalyzes the NADPH-dependent reduction of N-acetyl-5-glutamyl phosphate to yield N-acetyl-L-glutamate 5-semialdehyde. The sequence is that of N-acetyl-gamma-glutamyl-phosphate reductase from Burkholderia orbicola (strain MC0-3).